A 391-amino-acid chain; its full sequence is 8-amino-7-oxononanoate synthase (391 aa).

Residue arginine 20 coordinates substrate. A pyridoxal 5'-phosphate-binding site is contributed by 106–107; it reads GY. A substrate-binding site is contributed by histidine 131. Positions 178, 206, and 234 each coordinate pyridoxal 5'-phosphate. The residue at position 237 (lysine 237) is an N6-(pyridoxal phosphate)lysine. Threonine 353 contributes to the substrate binding site.

Belongs to the class-II pyridoxal-phosphate-dependent aminotransferase family. BioF subfamily. As to quaternary structure, homodimer. Pyridoxal 5'-phosphate serves as cofactor.

The enzyme catalyses 6-carboxyhexanoyl-[ACP] + L-alanine + H(+) = (8S)-8-amino-7-oxononanoate + holo-[ACP] + CO2. Its pathway is cofactor biosynthesis; biotin biosynthesis. Catalyzes the decarboxylative condensation of pimeloyl-[acyl-carrier protein] and L-alanine to produce 8-amino-7-oxononanoate (AON), [acyl-carrier protein], and carbon dioxide. This chain is 8-amino-7-oxononanoate synthase, found in Trichlorobacter lovleyi (strain ATCC BAA-1151 / DSM 17278 / SZ) (Geobacter lovleyi).